The sequence spans 309 residues: Probable 5-dehydro-4-deoxyglucarate dehydratase (309 aa).

This sequence belongs to the DapA family.

It catalyses the reaction 5-dehydro-4-deoxy-D-glucarate + H(+) = 2,5-dioxopentanoate + CO2 + H2O. It functions in the pathway carbohydrate acid metabolism; D-glucarate degradation; 2,5-dioxopentanoate from D-glucarate: step 2/2. The chain is Probable 5-dehydro-4-deoxyglucarate dehydratase from Saccharopolyspora erythraea (strain ATCC 11635 / DSM 40517 / JCM 4748 / NBRC 13426 / NCIMB 8594 / NRRL 2338).